The sequence spans 146 residues: Hemoglobin subunit beta (146 aa).

The residue at position 1 (valine 1) is an N-acetylvaline. One can recognise a Globin domain in the interval 2–146; it reads HLTGEEKSAV…VANALAHKYH (145 aa). Position 12 is a phosphothreonine (threonine 12). Serine 44 bears the Phosphoserine mark. Residue lysine 59 is modified to N6-acetyllysine. A heme b-binding site is contributed by histidine 63. Lysine 82 bears the N6-acetyllysine mark. Histidine 92 contributes to the heme b binding site. At cysteine 93 the chain carries S-nitrosocysteine. The residue at position 144 (lysine 144) is an N6-acetyllysine.

The protein belongs to the globin family. As to quaternary structure, heterotetramer of two alpha chains and two beta chains. As to expression, red blood cells.

Functionally, involved in oxygen transport from the lung to the various peripheral tissues. In Loris tardigradus (Slender loris), this protein is Hemoglobin subunit beta (HBB).